A 341-amino-acid polypeptide reads, in one-letter code: UDP-3-O-(3-hydroxymyristoyl)glucosamine N-acyltransferase (341 aa).

Histidine 239 functions as the Proton acceptor in the catalytic mechanism.

The protein belongs to the transferase hexapeptide repeat family. LpxD subfamily. As to quaternary structure, homotrimer.

It catalyses the reaction a UDP-3-O-[(3R)-3-hydroxyacyl]-alpha-D-glucosamine + a (3R)-hydroxyacyl-[ACP] = a UDP-2-N,3-O-bis[(3R)-3-hydroxyacyl]-alpha-D-glucosamine + holo-[ACP] + H(+). It carries out the reaction UDP-3-O-[(3R)-3-hydroxytetradecanoyl]-alpha-D-glucosamine + (3R)-hydroxytetradecanoyl-[ACP] = UDP-2-N,3-O-bis[(3R)-3-hydroxytetradecanoyl]-alpha-D-glucosamine + holo-[ACP] + H(+). Its pathway is glycolipid biosynthesis; lipid IV(A) biosynthesis; lipid IV(A) from (3R)-3-hydroxytetradecanoyl-[acyl-carrier-protein] and UDP-N-acetyl-alpha-D-glucosamine: step 3/6. Its function is as follows. Catalyzes the N-acylation of UDP-3-O-(hydroxytetradecanoyl)glucosamine using 3-hydroxytetradecanoyl-ACP as the acyl donor. Is involved in the biosynthesis of lipid A, a phosphorylated glycolipid that anchors the lipopolysaccharide to the outer membrane of the cell. The protein is UDP-3-O-(3-hydroxymyristoyl)glucosamine N-acyltransferase of Salmonella choleraesuis (strain SC-B67).